A 978-amino-acid chain; its full sequence is MSWARNIQSRIQQQQQLQKPGGLAPPSGNETPQKQPSSPTLSALSSPITSLTNALRGSGGISQPTTNTTSLTSTSPPSPTISTTTTQVKVGQTSFTTSTNLQAAASGNNLQASIQTTNITVTSPSMASPIGTSTGIQNPNAKPSSLPSPSQSPMQTRNTSAPTNNNNNNNTATTTTPTTTTTTTTTTTTTTTTTTTPSTSTTTTPTTSSSNLGQIQQQPPTLQQQQQQIQQQQQQQPTPIKQTTPYIFPNKIQPKSLTTDMFRGSEFSHVTFVEDLTRKLVNDQMGADGLHFEPAPFNQLFLNTQLQLSQLESNIDRRLDDLAEECNDFSYDYKRKLQDLTGSYQECFQHFKKLEKGVNTIGTKAVHFGDELDSVNQQKVKAQGALSLINYLLELNSVGASSEENGGITKRSDIFTNSDRIHELAHLVKKLSSVSEDIKEISGFKQGKLETESISNSLENDLLNQFERAAERNDYDKMKQCATTLHGFNGGERCRSRYIQKLKMFFDIDSFRKDENLANNITKRLIRGNNIVDTRFEIFYTDILKDVSHEQMVIQNVFVNQTSAMAMLIIRLFEQRVRLFIENVLSLESNNVSMFLQTVHYAFNSTKKLLVDPLQSYGIVGVDLNQLLNSIFYQYQEGYIQKETTYLVSLFQSNVVEECERLQTLDRYSMYLEDGLNPEITQMFVQQTENALTRSYTLSLDNILADNIKTIFFLMLEYLFEKYSMFVLNKYIELPMIPSSSSNVDTKSIQDSISQLFRVVLSINQIVGQIQSMFQVFVLPHIQTSMIVQSQCSDQLYFNISSLENTINTGLENSLTTMIQLIEKTLLPQGRNDYLIDDYDNSVTDTCASVIKLIQSFYDMAKINLQGKNFHIYVEELGLKSQFVFINHFKKFKIGQGIGTLKLMRDLTEYRNLSKQFKSQKVDDAFELLFEISKLHLVNPENFKLVIEGGALTRMSKQDLIIFIKQRSDFKSIWLDTL.

The span at 1-11 shows a compositional bias: polar residues; it reads MSWARNIQSRI. Disordered regions lie at residues 1–87 and 122–246; these read MSWA…TTTQ and TSPS…TTPY. Low complexity-rich tracts occupy residues 36–52 and 62–86; these read PSSPTLSALSSPITSLT and SQPTTNTTSLTSTSPPSPTISTTTT. A compositionally biased stretch (polar residues) spans 122-142; sequence TSPSMASPIGTSTGIQNPNAK. Residues 143–245 are compositionally biased toward low complexity; sequence PSSLPSPSQS…QPTPIKQTTP (103 aa). The stretch at 303 to 325 forms a coiled coil; that stretch reads NTQLQLSQLESNIDRRLDDLAEE.

The protein belongs to the SEC10 family. As to quaternary structure, the exocyst complex is composed of sec3/exoc1, sec5/exoc2, sec6/exoc3, sec8/exoc4, sec10/exoc5, sec15/exoc6, exo70/exoc7 and exo84/exoc8.

Component of the exocyst complex involved in the docking of exocytic vesicles with fusion sites on the plasma membrane. This Dictyostelium discoideum (Social amoeba) protein is Exocyst complex component 5 (exoc5).